Reading from the N-terminus, the 82-residue chain is MDSITSAASVVAAGLAVGLAAIGPGIGQGTASGGAVEGIARQPEAEGKIRGTLLLSLAFMESLTIYGLVVALVLLFANPFAG.

Helical transmembrane passes span 7–27 (AASVVAAGLAVGLAAIGPGIG) and 57–77 (LAFMESLTIYGLVVALVLLFA).

Belongs to the ATPase C chain family. In terms of assembly, F-type ATPases have 2 components, F(1) - the catalytic core - and F(0) - the membrane proton channel. F(1) has five subunits: alpha(3), beta(3), gamma(1), delta(1), epsilon(1). F(0) has four main subunits: a(1), b(1), b'(1) and c(10-14). The alpha and beta chains form an alternating ring which encloses part of the gamma chain. F(1) is attached to F(0) by a central stalk formed by the gamma and epsilon chains, while a peripheral stalk is formed by the delta, b and b' chains.

The protein localises to the cellular thylakoid membrane. Functionally, f(1)F(0) ATP synthase produces ATP from ADP in the presence of a proton or sodium gradient. F-type ATPases consist of two structural domains, F(1) containing the extramembraneous catalytic core and F(0) containing the membrane proton channel, linked together by a central stalk and a peripheral stalk. During catalysis, ATP synthesis in the catalytic domain of F(1) is coupled via a rotary mechanism of the central stalk subunits to proton translocation. Its function is as follows. Key component of the F(0) channel; it plays a direct role in translocation across the membrane. A homomeric c-ring of between 10-14 subunits forms the central stalk rotor element with the F(1) delta and epsilon subunits. The sequence is that of ATP synthase subunit c from Synechococcus sp. (strain RCC307).